We begin with the raw amino-acid sequence, 245 residues long: 2,3-bisphosphoglycerate-dependent phosphoglycerate mutase (245 aa).

Substrate contacts are provided by residues 8–15 (RHGQSLWN), 21–22 (TG), R60, 87–90 (ERHY), K98, 114–115 (RR), and 183–184 (GN). H9 acts as the Tele-phosphohistidine intermediate in catalysis. E87 serves as the catalytic Proton donor/acceptor.

Belongs to the phosphoglycerate mutase family. BPG-dependent PGAM subfamily.

It catalyses the reaction (2R)-2-phosphoglycerate = (2R)-3-phosphoglycerate. It functions in the pathway carbohydrate degradation; glycolysis; pyruvate from D-glyceraldehyde 3-phosphate: step 3/5. In terms of biological role, catalyzes the interconversion of 2-phosphoglycerate and 3-phosphoglycerate. This Bacillus thuringiensis subsp. konkukian (strain 97-27) protein is 2,3-bisphosphoglycerate-dependent phosphoglycerate mutase.